A 917-amino-acid chain; its full sequence is Nitrate reductase [NADH] 2 (917 aa).

A disordered region spans residues Met-1–Ser-72. The segment covering Ala-37–Val-47 has biased composition (polar residues). Positions Asp-57–Asn-67 are enriched in acidic residues. Cys-191 lines the Mo-molybdopterin pocket. Residues Ala-542–Ile-617 form the Cytochrome b5 heme-binding domain. The heme site is built by His-577 and His-600. An FAD-binding FR-type domain is found at Arg-660–Leu-772. FAD-binding positions include Arg-712–Thr-715, Val-729–Tyr-733, Phe-734, Phe-741, Leu-746–Ser-748, and Thr-799.

Belongs to the nitrate reductase family. In terms of assembly, homodimer. Requires FAD as cofactor. Heme is required as a cofactor. The cofactor is Mo-molybdopterin. As to expression, root, leaf, and shoot.

The enzyme catalyses nitrite + NAD(+) + H2O = nitrate + NADH + H(+). Nitrate reductase is a key enzyme involved in the first step of nitrate assimilation in plants, fungi and bacteria. The polypeptide is Nitrate reductase [NADH] 2 (NIA2) (Arabidopsis thaliana (Mouse-ear cress)).